The sequence spans 430 residues: MPFITQVYAREVLDSRGNPTVEVEVFTESGAFGRSIVPSGASTGEYEAVELRDGDKSRYLGKGVLKAVENVNTIIAQELEGNYSVLDQVVIDKALIELDGTENKGKLGANAILGVSMAVAHAAADYLDVPLYQYLGGFNSKQLPVPMMNILNGGAHADNNVDIQEFMVMPVGAESFRHALRIGAEIFHNLKAVLKDKGYNTAVGDEGGFAPNLGSNEEAITVILEAIEKAGYKPGEEVKLAMDVASSELFNKEDGKYHLDGEGVVKTSEEMVDWYEELTNKYPIISIEDGLDENDWAGHKLLTERIGSRVQLVGDDLFVTNTKKLAAGIEQGVGNSILIKVNQIGTLTETFEAIEMAKRAGYTAVISHRSGESEDATIADIAVATNAGQIKTGAPSRTDRVAKYNQLLRIEDQLGSTAEYLGLKSFYNLK.

Q164 serves as a coordination point for (2R)-2-phosphoglycerate. E206 acts as the Proton donor in catalysis. Mg(2+) contacts are provided by D243, E288, and D315. Residues K340, R369, S370, and K391 each contribute to the (2R)-2-phosphoglycerate site. The active-site Proton acceptor is the K340.

This sequence belongs to the enolase family. Mg(2+) is required as a cofactor.

It localises to the cytoplasm. It is found in the secreted. The protein localises to the cell surface. It catalyses the reaction (2R)-2-phosphoglycerate = phosphoenolpyruvate + H2O. It participates in carbohydrate degradation; glycolysis; pyruvate from D-glyceraldehyde 3-phosphate: step 4/5. Functionally, catalyzes the reversible conversion of 2-phosphoglycerate (2-PG) into phosphoenolpyruvate (PEP). It is essential for the degradation of carbohydrates via glycolysis. This Lysinibacillus sphaericus (strain C3-41) protein is Enolase.